The following is a 568-amino-acid chain: K(+) efflux antiporter 5 (568 aa).

Positions 1-20 (MARFAVIGLTFLLLLGTSLS) are cleaved as a signal peptide. The interval 59-78 (EFSENDSPEGSDGASFNSSV) is disordered. The next 12 helical transmembrane spans lie at 154-174 (LISD…VFSC), 178-198 (PVIV…LKFI), 201-221 (MVQV…ALGL), 230-250 (VVGP…MFLC), 264-284 (GIFV…KFLV), 298-318 (IGIL…LPVL), 334-354 (LLLI…SFVP), 389-409 (LGLS…TTEF), 422-442 (NLFA…HFLW), 447-467 (ILLA…AVVV), 476-496 (ISFH…VLLS), and 510-530 (LLLL…FKLI).

This sequence belongs to the monovalent cation:proton antiporter 2 (CPA2) transporter (TC 2.A.37) family. KEA (TC 2.A.37.1) subfamily. Expressed in roots, stems, leaves, flowers and silique.

It localises to the golgi apparatus membrane. The protein resides in the golgi apparatus. It is found in the trans-Golgi network membrane. Its subcellular location is the prevacuolar compartment membrane. The protein localises to the endomembrane system. It catalyses the reaction K(+)(in) + H(+)(out) = K(+)(out) + H(+)(in). In terms of biological role, electroneutral K(+)/H(+) efflux antiporter involved in K(+) homeostasis and osmotic adjustment. Together with KEA4 and KEA6, promotes growth and development, and facilitates endosomal pH and ions homeostasis, as well as salt tolerance (e.g. K(+), NaCl and LiCl), probably by supporting cell wall biosynthesis during rapid etiolated seedling growth. The chain is K(+) efflux antiporter 5 from Arabidopsis thaliana (Mouse-ear cress).